The sequence spans 326 residues: uncharacterized protein (326 aa).

A run of 2 helical transmembrane segments spans residues 9 to 29 (WVVL…RWSL) and 33 to 53 (ISIC…ANSY). 5 residues coordinate NADP(+): Asp120, Asn148, Tyr214, Lys218, and Thr252. The active-site Proton acceptor is Tyr214. Residue Lys218 is the Lowers pKa of active site Tyr of the active site.

The protein belongs to the short-chain dehydrogenases/reductases (SDR) family.

The protein localises to the mitochondrion membrane. Its function is as follows. Involved in the resistance to DNA-damaging agents. This is an uncharacterized protein from Saccharomyces cerevisiae (strain ATCC 204508 / S288c) (Baker's yeast).